A 636-amino-acid polypeptide reads, in one-letter code: Threonine--tRNA ligase (636 aa).

The TGS domain occupies 1 to 61; it reads MLKITLKDGS…NENCEVEILS (61 aa). Residues 244–534 form a catalytic region; the sequence is EHRKLGKELD…LIEHYEGKFP (291 aa). Residues cysteine 335, histidine 386, and histidine 511 each coordinate Zn(2+).

Belongs to the class-II aminoacyl-tRNA synthetase family. Homodimer. The cofactor is Zn(2+).

It localises to the cytoplasm. It catalyses the reaction tRNA(Thr) + L-threonine + ATP = L-threonyl-tRNA(Thr) + AMP + diphosphate + H(+). Its function is as follows. Catalyzes the attachment of threonine to tRNA(Thr) in a two-step reaction: L-threonine is first activated by ATP to form Thr-AMP and then transferred to the acceptor end of tRNA(Thr). Also edits incorrectly charged L-seryl-tRNA(Thr). In Natranaerobius thermophilus (strain ATCC BAA-1301 / DSM 18059 / JW/NM-WN-LF), this protein is Threonine--tRNA ligase.